A 680-amino-acid polypeptide reads, in one-letter code: DNA-directed RNA polymerase subunit beta' (680 aa).

Cys69, Cys71, Cys87, and Cys90 together coordinate Zn(2+). 3 residues coordinate Mg(2+): Asp489, Asp491, and Asp493.

Belongs to the RNA polymerase beta' chain family. RpoC1 subfamily. In terms of assembly, in plastids the minimal PEP RNA polymerase catalytic core is composed of four subunits: alpha, beta, beta', and beta''. When a (nuclear-encoded) sigma factor is associated with the core the holoenzyme is formed, which can initiate transcription. Mg(2+) serves as cofactor. Zn(2+) is required as a cofactor.

The protein resides in the plastid. It is found in the chloroplast. It carries out the reaction RNA(n) + a ribonucleoside 5'-triphosphate = RNA(n+1) + diphosphate. In terms of biological role, DNA-dependent RNA polymerase catalyzes the transcription of DNA into RNA using the four ribonucleoside triphosphates as substrates. This is DNA-directed RNA polymerase subunit beta' from Arabidopsis thaliana (Mouse-ear cress).